A 374-amino-acid chain; its full sequence is Gustatory receptor 23a (374 aa).

Over 1 to 6 (MFPPTR) the chain is Cytoplasmic. The helical transmembrane segment at 7–27 (VQASSRVVLKIFHFILVAFSL) threads the bilayer. The Extracellular portion of the chain corresponds to 28–36 (RSRRLSRLV). Residues 37-57 (LWLQFLGWLTWFISMWTQSVI) form a helical membrane-spanning segment. The Cytoplasmic portion of the chain corresponds to 58–72 (YAQTIDCTLDCSLRH). Residues 73 to 93 (ILTFFQTVSHAFIVVTSFLDG) form a helical membrane-spanning segment. Topologically, residues 94 to 112 (FRIKQDQLDEPIAFEDSDP) are extracellular. The helical transmembrane segment at 113–133 (WLAFTVLAMLVPTLGVEYLVC) threads the bilayer. At 134–226 (SNAPEYAFRI…YNDLHYLFVR (93 aa)) the chain is on the cytoplasmic side. A helical transmembrane segment spans residues 227 to 247 (INGYFGGSLLTIIIVHFAIFV). At 248–263 (SNSYWLFVDIRTRPWR) the chain is on the extracellular side. Residues 264 to 284 (IYAILLNLGFIFNVALQMAAA) traverse the membrane as a helical segment. The Cytoplasmic portion of the chain corresponds to 285-343 (CWHCQQSYNLGRQIGCLISKLVKPQGSKLYNDLVSEFSLQTLHQRFVVTAKDFFSLNLH). The chain crosses the membrane as a helical span at residues 344 to 364 (LLSSMFAAVVTYLVILIQFMF). Residues 365–374 (AERSSTRGSG) lie on the Extracellular side of the membrane.

This sequence belongs to the insect chemoreceptor superfamily. Gustatory receptor (GR) family. Gr2a subfamily. As to expression, expressed in the adult labellar chemosensory neurons and labral sense organ. Expressed in neurons of the dorsal pharyngeal sense organ of larvae.

It localises to the cell membrane. Its function is as follows. Probable gustatory receptor which mediates acceptance or avoidance behavior, depending on its substrates. This Drosophila melanogaster (Fruit fly) protein is Gustatory receptor 23a (Gr23a).